A 592-amino-acid polypeptide reads, in one-letter code: Putative nucleoside-triphosphatase (592 aa).

Glu-200 acts as the Proton acceptor in catalysis.

This sequence belongs to the GDA1/CD39 NTPase family.

It catalyses the reaction a ribonucleoside 5'-triphosphate + H2O = a ribonucleoside 5'-diphosphate + phosphate + H(+). This chain is Putative nucleoside-triphosphatase (NTP4), found in Toxoplasma gondii.